Consider the following 154-residue polypeptide: Transcriptional repressor NrdR (154 aa).

The segment at 3–34 (CPYCRHPDSRVVDSREADDGQLIRRRRSCPEC) is a zinc-finger region. One can recognise an ATP-cone domain in the interval 46–136 (LAVVKRSGVT…VYRSFESLAD (91 aa)).

The protein belongs to the NrdR family. It depends on Zn(2+) as a cofactor.

Negatively regulates transcription of bacterial ribonucleotide reductase nrd genes and operons by binding to NrdR-boxes. This Salinispora tropica (strain ATCC BAA-916 / DSM 44818 / JCM 13857 / NBRC 105044 / CNB-440) protein is Transcriptional repressor NrdR.